A 132-amino-acid polypeptide reads, in one-letter code: Fluoride-specific ion channel FluC 2 (132 aa).

Transmembrane regions (helical) follow at residues 8–28 (LQLE…GALL), 41–61 (LLVN…PAAP), 66–86 (LLGI…LAAV), and 96–116 (AALG…ALGF). 2 residues coordinate Na(+): G73 and T76.

It belongs to the fluoride channel Fluc/FEX (TC 1.A.43) family.

The protein localises to the cell inner membrane. It carries out the reaction fluoride(in) = fluoride(out). With respect to regulation, na(+) is not transported, but it plays an essential structural role and its presence is essential for fluoride channel function. Functionally, fluoride-specific ion channel. Important for reducing fluoride concentration in the cell, thus reducing its toxicity. This is Fluoride-specific ion channel FluC 2 from Synechococcus sp. (strain CC9605).